We begin with the raw amino-acid sequence, 259 residues long: UPF0246 protein Avin_11220 (259 aa).

Belongs to the UPF0246 family.

The sequence is that of UPF0246 protein Avin_11220 from Azotobacter vinelandii (strain DJ / ATCC BAA-1303).